A 401-amino-acid polypeptide reads, in one-letter code: Acetylornithine aminotransferase (401 aa).

Residues 121 to 122 (GA) and F154 contribute to the pyridoxal 5'-phosphate site. R157 contributes to the N(2)-acetyl-L-ornithine binding site. 239-242 (DEVQ) is a binding site for pyridoxal 5'-phosphate. The residue at position 268 (K268) is an N6-(pyridoxal phosphate)lysine. S296 is a N(2)-acetyl-L-ornithine binding site. T297 serves as a coordination point for pyridoxal 5'-phosphate.

It belongs to the class-III pyridoxal-phosphate-dependent aminotransferase family. ArgD subfamily. Homodimer. Requires pyridoxal 5'-phosphate as cofactor.

The protein localises to the cytoplasm. It catalyses the reaction N(2)-acetyl-L-ornithine + 2-oxoglutarate = N-acetyl-L-glutamate 5-semialdehyde + L-glutamate. It functions in the pathway amino-acid biosynthesis; L-arginine biosynthesis; N(2)-acetyl-L-ornithine from L-glutamate: step 4/4. The chain is Acetylornithine aminotransferase from Myxococcus xanthus.